The chain runs to 586 residues: Clathrin heavy chain linker domain-containing protein 1 (586 aa).

Residues 174-232 adopt a coiled-coil conformation; it reads MNLDALTKYMKHLEDKYAEIKQAMLIKYVPAQRKSDLDEEMIVLLKRRDVAENLNRKLQ.

The chain is Clathrin heavy chain linker domain-containing protein 1 (CLHC1) from Macaca fascicularis (Crab-eating macaque).